The following is a 642-amino-acid chain: Capsid vertex component 2 (642 aa).

The segment at 1 to 48 (MSLLHTFWRLPVAVFFEPHEENVLRCPERVLRRLLEDAAVTMRGGGWR) is interaction with major capsid protein/MCP. The segment at 97–125 (DEGPSPRTLLQPPCRPRSSSPGTGVAGAS) is disordered.

This sequence belongs to the herpesviridae CVC2 protein family. In terms of assembly, heterodimerizes with CVC1. Interacts with major capsid protein/MCP and triplex capsid protein 1/TRX1 at the pentamer vertices. Interacts with the large tegument protein/LTP.

It is found in the virion. The protein resides in the host nucleus. In terms of biological role, capsid vertex-specific component that plays a role during viral DNA encapsidation, assuring correct genome cleavage and presumably stabilizing capsids that contain full-length viral genomes. Participates in the interaction between the capsid and the tegument through interaction with the large tegument protein/LTP. This chain is Capsid vertex component 2, found in Homo sapiens (Human).